We begin with the raw amino-acid sequence, 144 residues long: Protein MIX23 (144 aa).

The residue at position 2 (Ala2) is an N-acetylalanine. The stretch at 82 to 120 (VKNLREEREKNLDDLTLLKQLRKEQTKLKWMQSELNVEE) forms a coiled coil. Lys100 is modified (N6-acetyllysine).

This sequence belongs to the MIX23 family.

The polypeptide is Protein MIX23 (Homo sapiens (Human)).